We begin with the raw amino-acid sequence, 450 residues long: UDP-N-acetylmuramate--L-alanine ligase (450 aa).

Residue 112–118 (GTHGKTT) coordinates ATP.

This sequence belongs to the MurCDEF family.

The protein localises to the cytoplasm. The enzyme catalyses UDP-N-acetyl-alpha-D-muramate + L-alanine + ATP = UDP-N-acetyl-alpha-D-muramoyl-L-alanine + ADP + phosphate + H(+). It functions in the pathway cell wall biogenesis; peptidoglycan biosynthesis. Functionally, cell wall formation. The sequence is that of UDP-N-acetylmuramate--L-alanine ligase from Endomicrobium trichonymphae.